The following is a 220-amino-acid chain: IQ domain-containing protein F3 (220 aa).

Positions 1–22 are enriched in basic and acidic residues; sequence MELDQDQKVETPEAAENGKDEM. A disordered region spans residues 1-81; the sequence is MELDQDQKVE…KQIQDEKTGI (81 aa). A compositionally biased stretch (acidic residues) spans 23 to 50; it reads QLEEQTQDEDTTETETETETETEAEAEG. Positions 69-93 form a coiled coil; the sequence is QAEKQIQDEKTGIKEADRAIQEQTQ. The 30-residue stretch at 146-175 folds into the IQ domain; it reads AELAGVKIQAWWRGTLVRRTLLLAILSAWT.

The protein is IQ domain-containing protein F3 (Iqcf3) of Rattus norvegicus (Rat).